We begin with the raw amino-acid sequence, 89 residues long: Small ribosomal subunit protein uS15 (89 aa).

This sequence belongs to the universal ribosomal protein uS15 family. As to quaternary structure, part of the 30S ribosomal subunit. Forms a bridge to the 50S subunit in the 70S ribosome, contacting the 23S rRNA.

Its function is as follows. One of the primary rRNA binding proteins, it binds directly to 16S rRNA where it helps nucleate assembly of the platform of the 30S subunit by binding and bridging several RNA helices of the 16S rRNA. In terms of biological role, forms an intersubunit bridge (bridge B4) with the 23S rRNA of the 50S subunit in the ribosome. The sequence is that of Small ribosomal subunit protein uS15 from Colwellia psychrerythraea (strain 34H / ATCC BAA-681) (Vibrio psychroerythus).